The following is a 147-amino-acid chain: Ubiquitin-conjugating enzyme E2 2 (147 aa).

The UBC core domain occupies 1 to 147 (MALKRIQKEL…AREWTQKYAM (147 aa)). C85 serves as the catalytic Glycyl thioester intermediate.

It belongs to the ubiquitin-conjugating enzyme family. Interacts with the brc-1-brd-1 heterodimer following ionizing irradiation. Expressed in the nervous system.

Its subcellular location is the nucleus. The protein resides in the chromosome. It is found in the cytoplasm. The enzyme catalyses S-ubiquitinyl-[E1 ubiquitin-activating enzyme]-L-cysteine + [E2 ubiquitin-conjugating enzyme]-L-cysteine = [E1 ubiquitin-activating enzyme]-L-cysteine + S-ubiquitinyl-[E2 ubiquitin-conjugating enzyme]-L-cysteine.. Its pathway is protein modification; protein ubiquitination. Functionally, catalyzes the covalent attachment of ubiquitin to other proteins. Mediates the selective degradation of short-lived and abnormal proteins. Plays a role in the DNA damage response. In particular, in response to ionizing radiation, associates with the E3 ubiquitin-protein ligase brc-1-brd-1 heterodimer on chromatin to activate E3-ubiquitin ligase activity of the heterodimer, and thus its DNA damage repair mechanisms. Required, cell autonomously, for death of the linker cell, a male-specific cell which guides the elongation of the gonad; perhaps acting as part of the ubiquitin proteasome system (UPS) and modulated by heat shock transcription factor hsf-1. This Caenorhabditis elegans protein is Ubiquitin-conjugating enzyme E2 2.